The sequence spans 354 residues: Tribbles homolog 3 (354 aa).

The interval 1 to 127 (MRATPLAASA…QHVARPTEVL (127 aa)) is interaction with DDIT3/CHOP. The disordered stretch occupies residues 36–61 (RDEPEPGPLPSLLPPSPPPASDLSPA). The span at 41-55 (PGPLPSLLPPSPPPA) shows a compositional bias: pro residues. Residues 68-315 (LGPYILLERE…ALGILLHPWL (248 aa)) enclose the Protein kinase domain. Over residues 320–333 (GRVSPPQSDRREMD) the composition is skewed to basic and acidic residues. Residues 320-354 (GRVSPPQSDRREMDQVVPDGPQLEEAEEGEVGLYG) form a disordered region. Over residues 341–354 (QLEEAEEGEVGLYG) the composition is skewed to acidic residues.

Belongs to the protein kinase superfamily. CAMK Ser/Thr protein kinase family. Tribbles subfamily. Interacts with AKT1, AKT2, MAP2K1 and MAP2K7. Interacts with ATF4. Interacts with DDIT3/CHOP and inhibits its interaction with EP300/P300. Interacts with APOBEC3C. Interacts (via N-terminus) with APOBEC3A. Interacts with RELA. Highly expressed in liver. Not detected in heart, brain, spleen, lung, skeletal muscle, kidney or testis.

It is found in the nucleus. In terms of biological role, inactive protein kinase which acts as a regulator of the integrated stress response (ISR), a process for adaptation to various stress. Inhibits the transcriptional activity of DDIT3/CHOP and is involved in DDIT3/CHOP-dependent cell death during ER stress. May play a role in programmed neuronal cell death but does not appear to affect non-neuronal cells. Acts as a negative feedback regulator of the ATF4-dependent transcription during the ISR: while TRIB3 expression is promoted by ATF4, TRIB3 protein interacts with ATF4 and inhibits ATF4 transcription activity. Disrupts insulin signaling by binding directly to Akt kinases and blocking their activation. May bind directly to and mask the 'Thr-308' phosphorylation site in AKT1. Interacts with the NF-kappa-B transactivator p65 RELA and inhibits its phosphorylation and thus its transcriptional activation activity. Interacts with MAPK kinases and regulates activation of MAP kinases. Can inhibit APOBEC3A editing of nuclear DNA. The protein is Tribbles homolog 3 (Trib3) of Mus musculus (Mouse).